Reading from the N-terminus, the 200-residue chain is Adenylyl-sulfate kinase (200 aa).

Residue 36-43 coordinates ATP; it reads GLSGSGKS. The active-site Phosphoserine intermediate is the serine 110.

It belongs to the APS kinase family.

The catalysed reaction is adenosine 5'-phosphosulfate + ATP = 3'-phosphoadenylyl sulfate + ADP + H(+). It participates in sulfur metabolism; hydrogen sulfide biosynthesis; sulfite from sulfate: step 2/3. Catalyzes the synthesis of activated sulfate. This Clostridium acetobutylicum (strain ATCC 824 / DSM 792 / JCM 1419 / IAM 19013 / LMG 5710 / NBRC 13948 / NRRL B-527 / VKM B-1787 / 2291 / W) protein is Adenylyl-sulfate kinase.